Here is a 95-residue protein sequence, read N- to C-terminus: Large ribosomal subunit protein uL23c (95 aa).

It belongs to the universal ribosomal protein uL23 family. In terms of assembly, part of the 50S ribosomal subunit.

Its subcellular location is the plastid. It is found in the chloroplast. Functionally, binds to 23S rRNA. The polypeptide is Large ribosomal subunit protein uL23c (rpl23) (Chlamydomonas reinhardtii (Chlamydomonas smithii)).